A 751-amino-acid chain; its full sequence is WD repeat-containing protein 91 (751 aa).

Residues 188 to 212 (IQEENESLRHKLFALQAESSRMKKE) adopt a coiled-coil conformation. Positions 264–395 (LSQSKKGPAR…ASSTESVGVR (132 aa)) are disordered. Residues 278–287 (SGASPTQTGS) show a composition bias toward polar residues. Over residues 334-346 (RLQEHGKERRELL) the composition is skewed to basic and acidic residues. Positions 377–391 (QAETSTKMPASSTES) are enriched in polar residues. 7 WD repeats span residues 410–449 (EHHSSIMYCRVDCSGRRVASLDVDGVIKVWSFNPIMQTKA), 452–492 (ISKS…NLCE), 497–559 (EDMP…QQLQ), 564–603 (PEPIAINCTAFNHNGNLLVTGAADGIVRLFDMQQHECAMS), 606–645 (AHDGEVYSVEFSYDENTVYSIGEDGKFIQWNIHKSGLKIS), 668–706 (VQFPRGRLFAFDSEGNYMLTCSSTGGVIFKLNGEDKVLE), and 713–751 (GHRAPVVTVDWSTAMDCGTCLTASMDGKIKLTTLLAQKS).

It belongs to the WD repeat WDR91 family.

It is found in the early endosome membrane. The protein localises to the late endosome membrane. Its function is as follows. Functions as a negative regulator of the PI3 kinase/PI3K activity associated with endosomal membranes. By modifying the phosphatidylinositol 3-phosphate/PtdInsP3 content of endosomal membranes may regulate endosome fusion, recycling, sorting and early to late endosome transport. In Gallus gallus (Chicken), this protein is WD repeat-containing protein 91.